Consider the following 234-residue polypeptide: Phosphoribosylaminoimidazole-succinocarboxamide synthase (234 aa).

This sequence belongs to the SAICAR synthetase family.

The enzyme catalyses 5-amino-1-(5-phospho-D-ribosyl)imidazole-4-carboxylate + L-aspartate + ATP = (2S)-2-[5-amino-1-(5-phospho-beta-D-ribosyl)imidazole-4-carboxamido]succinate + ADP + phosphate + 2 H(+). It functions in the pathway purine metabolism; IMP biosynthesis via de novo pathway; 5-amino-1-(5-phospho-D-ribosyl)imidazole-4-carboxamide from 5-amino-1-(5-phospho-D-ribosyl)imidazole-4-carboxylate: step 1/2. The sequence is that of Phosphoribosylaminoimidazole-succinocarboxamide synthase from Clostridium botulinum (strain Okra / Type B1).